The chain runs to 158 residues: Urease accessory protein UreE (158 aa).

A disordered region spans residues 133–158 (PEGGAYQAHSHDGHSHHQGHTHDHHD). The span at 141–158 (HSHDGHSHHQGHTHDHHD) shows a compositional bias: basic and acidic residues.

Belongs to the UreE family.

It localises to the cytoplasm. Involved in urease metallocenter assembly. Binds nickel. Probably functions as a nickel donor during metallocenter assembly. The protein is Urease accessory protein UreE of Chelativorans sp. (strain BNC1).